A 411-amino-acid chain; its full sequence is uncharacterized protein (411 aa).

The protein belongs to the peptidase M20 family.

This is an uncharacterized protein from Haemophilus influenzae (strain ATCC 51907 / DSM 11121 / KW20 / Rd).